The chain runs to 467 residues: Ribosomal RNA small subunit methyltransferase F (467 aa).

S-adenosyl-L-methionine is bound by residues 119-125, glutamate 143, aspartate 170, and aspartate 188; that span reads ASAPGSK. The active-site Nucleophile is cysteine 241.

Belongs to the class I-like SAM-binding methyltransferase superfamily. RsmB/NOP family.

Its subcellular location is the cytoplasm. It carries out the reaction cytidine(1407) in 16S rRNA + S-adenosyl-L-methionine = 5-methylcytidine(1407) in 16S rRNA + S-adenosyl-L-homocysteine + H(+). Functionally, specifically methylates the cytosine at position 1407 (m5C1407) of 16S rRNA. The protein is Ribosomal RNA small subunit methyltransferase F of Shewanella amazonensis (strain ATCC BAA-1098 / SB2B).